We begin with the raw amino-acid sequence, 155 residues long: Protein-export protein SecB (155 aa).

This sequence belongs to the SecB family. Homotetramer, a dimer of dimers. One homotetramer interacts with 1 SecA dimer.

Its subcellular location is the cytoplasm. In terms of biological role, one of the proteins required for the normal export of preproteins out of the cell cytoplasm. It is a molecular chaperone that binds to a subset of precursor proteins, maintaining them in a translocation-competent state. It also specifically binds to its receptor SecA. The sequence is that of Protein-export protein SecB from Citrobacter koseri (strain ATCC BAA-895 / CDC 4225-83 / SGSC4696).